The primary structure comprises 545 residues: uncharacterized protein (545 aa).

2 stretches are compositionally biased toward basic and acidic residues: residues 34–44 and 53–63; these read PMNKQNEKLKT and PRNDYSRRVSR. 3 disordered regions span residues 34-98, 269-296, and 415-444; these read PMNK…PESN, QNGT…PQDS, and ERPQ…SAPE. Over residues 69–78 the composition is skewed to polar residues; sequence TDSSEQQITA. The segment covering 415 to 428 has biased composition (basic and acidic residues); it reads ERPQRKTEHVKTPE. The segment covering 429–441 has biased composition (polar residues); sequence ENLQTKNPTTMTS.

This is an uncharacterized protein from Mus musculus (Mouse).